Here is a 238-residue protein sequence, read N- to C-terminus: Triosephosphate isomerase (238 aa).

A substrate-binding site is contributed by 7–9 (NFK). The active-site Electrophile is H91. E158 functions as the Proton acceptor in the catalytic mechanism. Substrate contacts are provided by G164 and S200.

The protein belongs to the triosephosphate isomerase family. As to quaternary structure, homodimer.

Its subcellular location is the cytoplasm. It carries out the reaction D-glyceraldehyde 3-phosphate = dihydroxyacetone phosphate. The protein operates within carbohydrate biosynthesis; gluconeogenesis. Its pathway is carbohydrate degradation; glycolysis; D-glyceraldehyde 3-phosphate from glycerone phosphate: step 1/1. In terms of biological role, involved in the gluconeogenesis. Catalyzes stereospecifically the conversion of dihydroxyacetone phosphate (DHAP) to D-glyceraldehyde-3-phosphate (G3P). The polypeptide is Triosephosphate isomerase (Ureaplasma parvum serovar 3 (strain ATCC 27815 / 27 / NCTC 11736)).